The chain runs to 261 residues: Nickel import ATP-binding protein NikD (261 aa).

The region spanning 6–248 (LRIEGLTIAT…PRHDATRALV (243 aa)) is the ABC transporter domain. An ATP-binding site is contributed by 41–48 (GASGSGKS).

This sequence belongs to the ABC transporter superfamily. Nickel importer (TC 3.A.1.5.3) family. As to quaternary structure, the complex is composed of two ATP-binding proteins (NikD and NikE), two transmembrane proteins (NikB and NikC) and a solute-binding protein (NikA).

The protein localises to the cell inner membrane. It carries out the reaction Ni(2+)(out) + ATP + H2O = Ni(2+)(in) + ADP + phosphate + H(+). In terms of biological role, part of the ABC transporter complex NikABCDE involved in nickel import. Responsible for energy coupling to the transport system. In Rhodospirillum rubrum (strain ATCC 11170 / ATH 1.1.1 / DSM 467 / LMG 4362 / NCIMB 8255 / S1), this protein is Nickel import ATP-binding protein NikD.